The primary structure comprises 622 residues: Low affinity potassium transport system protein Kup (622 aa).

12 helical membrane passes run 9 to 29, 49 to 69, 103 to 123, 137 to 157, 165 to 185, 213 to 233, 247 to 267, 276 to 296, 337 to 357, 363 to 383, 396 to 416, and 419 to 439; these read LPAITLAAIGVVYGDIGTSPL, VFGFLSLIFWLLIFVVSIKYL, VIMGLIGGSFFYGEVVITPAI, PQLDTWIVPLSIIVLTLLFMI, VGKLFAPIMLTWFLILAGLGL, VSFIALGAVVLSITGGEVLYA, WFTVVLPSLTLNYFGQGALLL, PFFLLAPDWALIPLLIIAALA, IYIPFVNWMLYVAVVIVIVSF, LAAAYGIAVTGTMVLTSILST, FVALILIAFLCVDIPLFTANL, and LLSGGWLPLSLGTVMFIVMTT.

It belongs to the HAK/KUP transporter (TC 2.A.72) family.

The protein localises to the cell inner membrane. The catalysed reaction is K(+)(in) + H(+)(in) = K(+)(out) + H(+)(out). Its function is as follows. Responsible for the low-affinity transport of potassium into the cell. Likely operates as a K(+):H(+) symporter. This chain is Low affinity potassium transport system protein Kup, found in Shigella flexneri.